The sequence spans 84 residues: Small ribosomal subunit protein uS17 (84 aa).

Belongs to the universal ribosomal protein uS17 family. As to quaternary structure, part of the 30S ribosomal subunit.

In terms of biological role, one of the primary rRNA binding proteins, it binds specifically to the 5'-end of 16S ribosomal RNA. In Blochmanniella pennsylvanica (strain BPEN), this protein is Small ribosomal subunit protein uS17.